Here is a 744-residue protein sequence, read N- to C-terminus: MADDGMLLNFDLGSGPVKPQVKFKGGRWRDRKQAEKSARIASGKQSQPKSSTDGPDDGRSSKRQRTDDGDFDNGFDYKSANRFGSRPKHFDNDGHGGASGQSRSHQSDGKSKQVISRLFSFNPAQKTEADEKQGEWTAPEATNAPLSDVANFGTLTISARLVDELGKMGLERPTGIQNKVIPHMLTSSSDAFVQAETGSGKTLAYLLPILHRVLLLSVKGGAQIHRDSGAFAIIVAPTRELAKQVHTVLEKLIRPFPWLVSTAITGGESKKAEKARIRKGVNFLVATPGRLADHIDNTKALNLSIVRWLILDEGDRLMDLGFEDDLKKVITALKAVDVSDTLPDGTPLKALPERRVTVLCSATMKMNVQKLGEMSLADATFLAAKKEDMELDVQKSEMKAPAQLHQYYSVVPAKLRLVTLISYLKSTFSRRGKTMKAIIFISCADSVDFHYELLRDPNTTEAPVAASKEAESISKTVSKAAYITSPASPEVVLHRMHGSLSQPIRTATLKSFSACKSPSLLITTDVSSRGLDIPSVDLVIEYDPAFSFADHIHRVGRTARAGKPGDALLFLLPGTEEGYIELMKGSTTPTSQSYDSILQKGMMTKLEFPVETTAKPEDGHSFHDKAESLQLHIEQRLLEDTKRLELARNGFKSHIRAYATHTKEERKHFDISELHLGHTAKSYGLREAPGGIGQGVERKTKKRTNKGVEKDPEQAAGDERQNQNIIRKKSMMLMNSAADEFNIG.

Residues 1–113 are disordered; the sequence is MADDGMLLNF…SHQSDGKSKQ (113 aa). Basic and acidic residues predominate over residues 27-38; the sequence is RWRDRKQAEKSA. Residues 43–53 are compositionally biased toward polar residues; the sequence is GKQSQPKSSTD. Residues 56–68 are compositionally biased toward basic and acidic residues; sequence DDGRSSKRQRTDD. The Q motif motif lies at 150-178; the sequence is ANFGTLTISARLVDELGKMGLERPTGIQN. The Helicase ATP-binding domain maps to 182–382; the sequence is PHMLTSSSDA…EMSLADATFL (201 aa). ATP is bound at residue 195–202; sequence AETGSGKT. The short motif at 312 to 315 is the DEAD box element; the sequence is DEGD. The Helicase C-terminal domain maps to 416 to 614; it reads RLVTLISYLK…KLEFPVETTA (199 aa). The disordered stretch occupies residues 685 to 724; that stretch reads LREAPGGIGQGVERKTKKRTNKGVEKDPEQAAGDERQNQN. The span at 706–721 shows a compositional bias: basic and acidic residues; it reads KGVEKDPEQAAGDERQ.

Belongs to the DEAD box helicase family. DDX31/DBP7 subfamily.

The protein resides in the nucleus. It is found in the nucleolus. It catalyses the reaction ATP + H2O = ADP + phosphate + H(+). Functionally, ATP-binding RNA helicase involved in the biogenesis of 60S ribosomal subunits and is required for the normal formation of 25S and 5.8S rRNAs. The chain is ATP-dependent RNA helicase DBP7 (DBP7) from Gibberella zeae (strain ATCC MYA-4620 / CBS 123657 / FGSC 9075 / NRRL 31084 / PH-1) (Wheat head blight fungus).